The sequence spans 447 residues: Adenylosuccinate synthetase (447 aa).

Residues G12–K18 and G40–T42 contribute to the GTP site. The active-site Proton acceptor is the D13. Mg(2+)-binding residues include D13 and G40. Residues D13–K16, N38–H41, T128, R142, Q223, T238, and R302 each bind IMP. H41 (proton donor) is an active-site residue. T298–R304 is a substrate binding site. GTP-binding positions include R304, K330 to D332, and S412 to G414.

This sequence belongs to the adenylosuccinate synthetase family. As to quaternary structure, homodimer. The cofactor is Mg(2+).

It localises to the cytoplasm. It carries out the reaction IMP + L-aspartate + GTP = N(6)-(1,2-dicarboxyethyl)-AMP + GDP + phosphate + 2 H(+). It participates in purine metabolism; AMP biosynthesis via de novo pathway; AMP from IMP: step 1/2. Functionally, plays an important role in the de novo pathway of purine nucleotide biosynthesis. Catalyzes the first committed step in the biosynthesis of AMP from IMP. The sequence is that of Adenylosuccinate synthetase from Nostoc sp. (strain PCC 7120 / SAG 25.82 / UTEX 2576).